The following is a 226-amino-acid chain: PDGF-related-transforming protein sis (226 aa).

Residues 201-215 (RRPPKGKHRKCKHTH) are compositionally biased toward basic residues. The tract at residues 201–226 (RRPPKGKHRKCKHTHDKTALKETLGA) is disordered.

Belongs to the PDGF/VEGF growth factor family.

This is PDGF-related-transforming protein sis (V-SIS) from Woolly monkey sarcoma virus (WMSV).